The primary structure comprises 561 residues: Formate--tetrahydrofolate ligase (561 aa).

Position 66 to 73 (66 to 73 (TPAGEGKT)) interacts with ATP.

Belongs to the formate--tetrahydrofolate ligase family.

It carries out the reaction (6S)-5,6,7,8-tetrahydrofolate + formate + ATP = (6R)-10-formyltetrahydrofolate + ADP + phosphate. The protein operates within one-carbon metabolism; tetrahydrofolate interconversion. The chain is Formate--tetrahydrofolate ligase from Methylibium petroleiphilum (strain ATCC BAA-1232 / LMG 22953 / PM1).